The sequence spans 926 residues: Piwi-like protein Ago3 (926 aa).

Residues 1–62 form a disordered region; that stretch reads MADPGKGRGR…PSTSGVSIGG (62 aa). Residues 26–56 are compositionally biased toward low complexity; that stretch reads SPSQSESQSPESTPEQSTAPSTIASATPSTS. The PAZ domain maps to 339–455; that stretch reads TVLSLIKEVV…LIPELCQLTG (117 aa). One can recognise a Piwi domain in the interval 620–912; sequence LVVAICSTKR…LSYLVGQCVH (293 aa). Gln-672 contributes to the Mg(2+) binding site. Residues Asp-697, Glu-735, Asp-767, and His-901 contribute to the active site. Leu-926 is a Mg(2+) binding site.

Belongs to the argonaute family. Piwi subfamily. As to quaternary structure, interacts (when symmetrically methylated) with Papi/TDRKH. Interacts with Vasa. It depends on Mg(2+) as a cofactor. Arginine methylation is required for the interaction with Tudor domain-containing protein Papi/TDRKH. As to expression, highly expressed in the larval testis, pupal ovary and adult eggs.

The protein resides in the cytoplasm. Its function is as follows. Endoribonuclease that plays a central role during spermatogenesis by repressing transposable elements and preventing their mobilization, which is essential for the germline integrity. Plays an essential role in meiotic differentiation of spermatocytes, germ cell differentiation and in self-renewal of spermatogonial stem cells. Its presence in oocytes suggests that it may participate in similar functions during oogenesis in females. Acts via the piRNA metabolic process, which mediates the repression of transposable elements during meiosis by forming complexes composed of piRNAs and Piwi proteins and govern the methylation and subsequent repression of transposons. Directly binds piRNAs, a class of 24 to 30 nucleotide RNAs that are generated by a Dicer-independent mechanism and are primarily derived from transposons and other repeated sequence elements. Strongly prefers a have adenine at position 10 of their guide (g10A preference). Plays a key role in the piRNA amplification loop, also named ping-pong amplification cycle: antisense piRNA-bound Siwi and sense piRNA-bound Ago3 reciprocally cleave complementary transcripts, to couple the amplification of piRNAs with the repression of transposable elements. In Bombyx mori (Silk moth), this protein is Piwi-like protein Ago3 (AGO3).